Reading from the N-terminus, the 280-residue chain is UDP-3-O-acyl-N-acetylglucosamine deacetylase (280 aa).

The Zn(2+) site is built by His-79, His-237, and Asp-241. His-264 serves as the catalytic Proton donor.

The protein belongs to the LpxC family. Zn(2+) is required as a cofactor.

The enzyme catalyses a UDP-3-O-[(3R)-3-hydroxyacyl]-N-acetyl-alpha-D-glucosamine + H2O = a UDP-3-O-[(3R)-3-hydroxyacyl]-alpha-D-glucosamine + acetate. The protein operates within glycolipid biosynthesis; lipid IV(A) biosynthesis; lipid IV(A) from (3R)-3-hydroxytetradecanoyl-[acyl-carrier-protein] and UDP-N-acetyl-alpha-D-glucosamine: step 2/6. Catalyzes the hydrolysis of UDP-3-O-myristoyl-N-acetylglucosamine to form UDP-3-O-myristoylglucosamine and acetate, the committed step in lipid A biosynthesis. This chain is UDP-3-O-acyl-N-acetylglucosamine deacetylase, found in Chlamydia abortus (strain DSM 27085 / S26/3) (Chlamydophila abortus).